Here is a 213-residue protein sequence, read N- to C-terminus: Large ribosomal subunit protein uL3 (213 aa).

The protein belongs to the universal ribosomal protein uL3 family. In terms of assembly, part of the 50S ribosomal subunit. Forms a cluster with proteins L14 and L19.

In terms of biological role, one of the primary rRNA binding proteins, it binds directly near the 3'-end of the 23S rRNA, where it nucleates assembly of the 50S subunit. In Bifidobacterium adolescentis (strain ATCC 15703 / DSM 20083 / NCTC 11814 / E194a), this protein is Large ribosomal subunit protein uL3.